The sequence spans 329 residues: Putative oligopeptide transport ATP-binding protein YkfD (329 aa).

Positions 7–252 (LEVSQLKMHF…PLHPYTKALL (246 aa)) constitute an ABC transporter domain. 44–51 (GESGCGKS) serves as a coordination point for ATP.

This sequence belongs to the ABC transporter superfamily.

The polypeptide is Putative oligopeptide transport ATP-binding protein YkfD (ykfD) (Bacillus subtilis (strain 168)).